An 89-amino-acid chain; its full sequence is Small ribosomal subunit protein uS15 (89 aa).

This sequence belongs to the universal ribosomal protein uS15 family. Part of the 30S ribosomal subunit. Forms a bridge to the 50S subunit in the 70S ribosome, contacting the 23S rRNA.

Its function is as follows. One of the primary rRNA binding proteins, it binds directly to 16S rRNA where it helps nucleate assembly of the platform of the 30S subunit by binding and bridging several RNA helices of the 16S rRNA. Functionally, forms an intersubunit bridge (bridge B4) with the 23S rRNA of the 50S subunit in the ribosome. This is Small ribosomal subunit protein uS15 from Jannaschia sp. (strain CCS1).